A 1269-amino-acid chain; its full sequence is Histone-lysine N-methyltransferase SETDB1 (1269 aa).

A coiled-coil region spans residues 9-63 (KELGISMDDLRELIDRELEKIEFVKQRKAQLLEMEQLVKQKEAEVDHVDKLFDNA). Disordered regions lie at residues 85–121 (YKES…GEAV) and 153–188 (QKKS…DMSK). Over residues 103–112 (EIPDEDDDDV) the composition is skewed to acidic residues. The span at 164–177 (SSHPSSPTSSVGGS) shows a compositional bias: low complexity. 2 Tudor domains span residues 250–312 (ENLT…RPWS) and 340–395 (VLLK…MFSM). Residues 396 to 414 (KTSNASTQEKQQAGQQRTR) show a composition bias toward polar residues. The tract at residues 396–516 (KTSNASTQEK…FQSNQSVQPV (121 aa)) is disordered. A compositionally biased stretch (low complexity) spans 462-476 (DSQQAQSKKQVAKKS). A compositionally biased stretch (polar residues) spans 486–497 (SGQSSPIPTESV). In terms of domain architecture, MBD spans 620–691 (HRGKNPLLVP…EMFCLDPYVL (72 aa)). The 74-residue stretch at 753-826 (VGCDCTDGCR…MCNNRLVQHG (74 aa)) folds into the Pre-SET domain. Cys755, Cys757, Cys761, Cys767, Cys769, Cys807, Cys811, Cys813, and Cys818 together coordinate Zn(2+). The 416-residue stretch at 829–1244 (VRLQLFKTQN…AGTELTWDYN (416 aa)) folds into the SET domain. S-adenosyl-L-methionine-binding positions include 839-841 (KGW), Asp877, and Tyr879. Residues 894–1139 (EGYESDAKSS…VAASAGPVKR (246 aa)) form a disordered region. Residues 919–932 (SGSEDQEESNDSSD) are compositionally biased toward acidic residues. Composition is skewed to basic and acidic residues over residues 968–989 (ASKD…ETSK) and 1021–1033 (ETDK…EASK). A compositionally biased stretch (low complexity) spans 1078 to 1094 (TEEVLTLSSSSDSEVGS). The span at 1106–1120 (ATANDSDDIQTISSG) shows a compositional bias: polar residues. S-adenosyl-L-methionine is bound by residues Arg1198 and 1201–1202 (NH). Cys1204, Cys1257, Cys1259, and Cys1264 together coordinate Zn(2+). The 17-residue stretch at 1253–1269 (KKLLCCCGSTECRGRLL) folds into the Post-SET domain.

This sequence belongs to the class V-like SAM-binding methyltransferase superfamily. Histone-lysine methyltransferase family. Suvar3-9 subfamily.

The protein resides in the nucleus. The protein localises to the chromosome. The catalysed reaction is N(6),N(6)-dimethyl-L-lysyl(9)-[histone H3] + S-adenosyl-L-methionine = N(6),N(6),N(6)-trimethyl-L-lysyl(9)-[histone H3] + S-adenosyl-L-homocysteine + H(+). Its function is as follows. Histone methyltransferase that specifically trimethylates 'Lys-9' of histone H3. H3 'Lys-9' trimethylation represents a specific tag for epigenetic transcriptional repression by recruiting HP1 (CBX1, CBX3 and/or CBX5) proteins to methylated histones. Mainly functions in euchromatin regions, thereby playing a central role in the silencing of euchromatic genes. H3 'Lys-9' trimethylation is coordinated with DNA methylation. Plays a role in promoter hypermethylation and transcriptional silencing of tumor suppressor genes (TSGs) or other tumor-related genes. Also required to maintain a transcriptionally repressive state of genes in undifferentiated embryonic stem cells (ESCs). Associates at promoter regions of tumor suppressor genes (TSGs) leading to their gene silencing. The polypeptide is Histone-lysine N-methyltransferase SETDB1 (setdb1) (Xenopus laevis (African clawed frog)).